Here is a 229-residue protein sequence, read N- to C-terminus: ATP synthase subunit a 3 (229 aa).

6 helical membrane-spanning segments follow: residues 25-45 (ADAV…SFLA), 86-106 (VATI…PGFF), 111-131 (NINT…VVGI), 142-162 (FCGP…IGHL), 181-201 (LVLI…MMLM), and 202-222 (GVLV…IYIQ).

It belongs to the ATPase A chain family. F-type ATPases have 2 components, CF(1) - the catalytic core - and CF(0) - the membrane proton channel. CF(1) has five subunits: alpha(3), beta(3), gamma(1), delta(1), epsilon(1). CF(0) has three main subunits: a(1), b(2) and c(9-12). The alpha and beta chains form an alternating ring which encloses part of the gamma chain. CF(1) is attached to CF(0) by a central stalk formed by the gamma and epsilon chains, while a peripheral stalk is formed by the delta and b chains.

Its subcellular location is the cell inner membrane. Key component of the proton channel; it plays a direct role in the translocation of protons across the membrane. The chain is ATP synthase subunit a 3 from Pelobacter propionicus (strain DSM 2379 / NBRC 103807 / OttBd1).